Consider the following 29-residue polypeptide: Cyclotide mela-4 (29 aa).

The cyclopeptide (Gly-Asn) cross-link spans 1–29 (GKPICGETCFKGKCYTPGCTCSYPICKKN). Cystine bridges form between cysteine 5-cysteine 19, cysteine 9-cysteine 21, and cysteine 14-cysteine 26.

This is a cyclic peptide. Post-translationally, contains 3 disulfide bonds.

Probably participates in a plant defense mechanism (Potential). Binds to and induces leakage in phospholipd membranes, particularly ones containing 1-palmitoyl-2-oleophosphatidylethanolamine (POPE). In vitro, displays cytotoxicity against cultured cells. Not active against Gram-negative bacterium E.coli ATCC 25922 or Gram-positive bacterium S.aureus ATCC 25923 up to a concentration of 64 uM. The polypeptide is Cyclotide mela-4 (Melicytus latifolius (Norfolk Island mahoe)).